The chain runs to 254 residues: 3-oxo-5-alpha-steroid 4-dehydrogenase 2 (254 aa).

4 helical membrane passes run 8-28 (SPVLAGSATLVALGALALYVA), 72-92 (PLSLFGPPGTVLLGLFCLHYF), 146-166 (FSLGVFLFILGMGINIHSDYI), and 206-226 (LATWSLPALAFAFFSLCFLGL).

This sequence belongs to the steroid 5-alpha reductase family. Expressed in high levels in the prostate and many other androgen-sensitive tissues.

It is found in the microsome membrane. It localises to the endoplasmic reticulum membrane. It catalyses the reaction a 3-oxo-5alpha-steroid + NADP(+) = a 3-oxo-Delta(4)-steroid + NADPH + H(+). It carries out the reaction 17beta-hydroxy-5alpha-androstan-3-one + NADP(+) = testosterone + NADPH + H(+). The catalysed reaction is 5alpha-pregnane-3,20-dione + NADP(+) = progesterone + NADPH + H(+). Its function is as follows. Converts testosterone (T) into 5-alpha-dihydrotestosterone (DHT) and progesterone or corticosterone into their corresponding 5-alpha-3-oxosteroids. It plays a central role in sexual differentiation and androgen physiology. The protein is 3-oxo-5-alpha-steroid 4-dehydrogenase 2 (SRD5A2) of Homo sapiens (Human).